Here is a 1356-residue protein sequence, read N- to C-terminus: MKLFLILLVLPLASCFFTCNSNANLSMLQLGVPDNSSTIVTGLLPTHWFCANQSTSVYSANGFFYIDVGNHRSAFALHTGYYDANQYYIYVTNEIGLNASVTLKICKFSRNTTFDFLSNASSSFDCIVNLLFTEQLGAPLGITISGETVRLHLYNVTRTFYVPAAYKLTKLSVKCYFNYSCVFSVVNATVTVNVTTHNGRVVNYTVCDDCNGYTDNIFSVQQDGRIPNGFPFNNWFLLTNGSTLVDGVSRLYQPLRLTCLWPVPGLKSSTGFVYFNATGSDVNCNGYQHNSVVDVMRYNLNFSANSLDNLKSGVIVFKTLQYDVLFYCSNSSSGVLDTTIPFGPSSQPYYCFINSTINTTHVSTFVGILPPTVREIVVARTGQFYINGFKYFDLGFIEAVNFNVTTASATDFWTVAFATFVDVLVNVSATNIQNLLYCDSPFEKLQCEHLQFGLQDGFYSANFLDDNVLPETYVALPIYYQHTDINFTATASFGGSCYVCKPHQVNISLNGNTSVCVRTSHFSIRYIYNRVKSGSPGDSSWHIYLKSGTCPFSFSKLNNFQKFKTICFSTVEVPGSCNFPLEATWHYTSYTIVGALYVTWSEGNSITGVPYPVSGIREFSNLVLNNCTKYNIYDYVGTGIIRSSNQSLAGGITYVSNSGNLLGFKNVSTGNIFIVTPCNQPDQVAVYQQSIIGAMTAVNESRYGLQNLLQLPNFYYVSNGGNNCTTAVMTYSNFGICADGSLIPVRPRNSSDNGISAIITANLSIPSNWTTSVQVEYLQITSTPIVVDCATYVCNGNPRCKNLLKQYTSACKTIEDALRLSAHLETNDVSSMLTFDSNAFSLANVTSFGDYNLSSVLPQRNIRSSRIAGRSALEDLLFSKVVTSGLGTVDVDYKSCTKGLSIADLACAQYYNGIMVLPGVADAERMAMYTGSLIGGMVLGGLTSAAAIPFSLALQARLNYVALQTDVLQENQKILAASFNKAINNIVASFSSVNDAITQTAEAIHTVTIALNKIQDVVNQQGSALNHLTSQLRHNFQAISNSIQAIYDRLDSIQADQQVDRLITGRLAALNAFVSQVLNKYTEVRGSRRLAQQKINECVKSQSNRYGFCGNGTHIFSIVNSAPDGLLFLHTVLLPTDYKNVKAWSGICVDGIYGYVLRQPNLVLYSDNGVFRVTSRVMFQPRLPVLSDFVQIYNCNVTFVNISRVELHTVIPDYVDVNKTLQEFAQNLPKYVKPNFDLTPFNLTYLNLSSELKQLEAKTASLFQTTVELQGLIDQINSTYVDLKLLNRFENYIKWPWWVWLIISVVFVVLLSLLVFCCLSTGCCGCCNCLTSSMRGCCDCGSTKLPYYEFEKVHVQ.

Residues 1–18 (MKLFLILLVLPLASCFFT) form the signal peptide. S1 regions lie at residues 16-717 (FFTC…FYYV) and 19-717 (CNSN…FYYV). At 19–1296 (CNSNANLSML…NRFENYIKWP (1278 aa)) the chain is on the virion surface side. N-linked (GlcNAc) asparagine; by host glycans are attached at residues N35, N52, and N98. A disulfide bridge links C106 with C126. The N-linked (GlcNAc) asparagine; by host glycan is linked to N155. The cysteines at positions 175 and 181 are disulfide-linked. N-linked (GlcNAc) asparagine; by host glycosylation is found at N187 and N193. C207 and C210 are disulfide-bonded. 8 N-linked (GlcNAc) asparagine; by host glycosylation sites follow: N240, N276, N301, N330, N354, N358, N403, and N426. C259 and C284 form a disulfide bridge. The cysteines at positions 328 and 351 are disulfide-linked. An intrachain disulfide couples C438 to C447. N486 is a glycosylation site (N-linked (GlcNAc...) asparagine; by host). The cysteines at positions 497 and 500 are disulfide-linked. N506 carries an N-linked (GlcNAc) asparagine; by host glycan. An N-linked (GlcNAc...) asparagine; by host glycan is attached at N512. 2 cysteine pairs are disulfide-bonded: C516–C567 and C550–C577. The interval 598–728 (VTWSEGNSIT…NGGNNCTTAV (131 aa)) is interaction with host ANPEP. 5 N-linked (GlcNAc) asparagine; by host glycosylation sites follow: N626, N645, N666, N699, and N723. A disulfide bond links C627 and C678. The S2 stretch occupies residues 718 to 1356 (SNGGNNCTTA…YYEFEKVHVQ (639 aa)). Residues C724 and C737 are joined by a disulfide bond. N-linked (GlcNAc) asparagine; by host glycosylation is found at N749, N762, and N768. Intrachain disulfides connect C789-C811, C794-C800, and C896-C907. Positions 934-954 (IGGMVLGGLTSAAAIPFSLAL) are fusion peptide. The interval 948–1067 (IPFSLALQAR…QVDRLITGRL (120 aa)) is heptad repeat 1 (HR1). Residues 1015–1059 (QDVVNQQGSALNHLTSQLRHNFQAISNSIQAIYDRLDSIQADQQV) adopt a coiled-coil conformation. An intrachain disulfide couples C1098 to C1109. Residues N1111, N1196, N1201, N1218, N1242, N1247, and N1277 are each glycosylated (N-linked (GlcNAc) asparagine; by host). A heptad repeat 2 (HR2) region spans residues 1212–1308 (PDYVDVNKTL…VWLIISVVFV (97 aa)). Residues 1244–1286 (TYLNLSSELKQLEAKTASLFQTTVELQGLIDQINSTYVDLKLL) are a coiled coil. A helical transmembrane segment spans residues 1297–1316 (WWVWLIISVVFVVLLSLLVF). Residues 1317–1356 (CCLSTGCCGCCNCLTSSMRGCCDCGSTKLPYYEFEKVHVQ) lie on the Intravirion side of the membrane. Residues 1352 to 1356 (KVHVQ) carry the KxHxx motif.

It belongs to the alphacoronaviruses spike protein family. In terms of assembly, homotrimer. During virus morphogenesis, found in a complex with M proteins. Interacts with host ACE2. Glycosylated by host with heterogeneous N-linked glycans protruding from the trimer surface. Highly glycosylated by host, occluding many regions across the surface of the protein.

The protein localises to the virion membrane. It localises to the host endoplasmic reticulum-Golgi intermediate compartment membrane. Its function is as follows. S1 region attaches the virion to the cell membrane by interacting with host ACE2, initiating the infection. Binding to the receptor probably induces conformational changes in the S glycoprotein unmasking the fusion peptide and activating membranes fusion. S2 region belongs to the class I viral fusion protein. Under the current model, the protein has at least 3 conformational states: pre-fusion native state, pre-hairpin intermediate state, and post-fusion hairpin state. During viral and target cell membrane fusion, the coiled coil regions (heptad repeats) regions assume a trimer-of-hairpins structure, positioning the fusion peptide in close proximity to the C-terminal region of the ectodomain. The formation of this structure appears to drive apposition and subsequent fusion of viral and target cell membranes. This is Spike glycoprotein from Human coronavirus NL63 (HCoV-NL63).